Consider the following 355-residue polypeptide: Uroporphyrinogen decarboxylase (355 aa).

Substrate contacts are provided by residues 27–31, aspartate 77, tyrosine 154, threonine 209, and histidine 327; that span reads RQAGR.

It belongs to the uroporphyrinogen decarboxylase family. In terms of assembly, homodimer.

It is found in the cytoplasm. The catalysed reaction is uroporphyrinogen III + 4 H(+) = coproporphyrinogen III + 4 CO2. The protein operates within porphyrin-containing compound metabolism; protoporphyrin-IX biosynthesis; coproporphyrinogen-III from 5-aminolevulinate: step 4/4. Functionally, catalyzes the decarboxylation of four acetate groups of uroporphyrinogen-III to yield coproporphyrinogen-III. This is Uroporphyrinogen decarboxylase from Tolumonas auensis (strain DSM 9187 / NBRC 110442 / TA 4).